Here is a 327-residue protein sequence, read N- to C-terminus: GMP reductase (327 aa).

Residue Cys175 is the Thioimidate intermediate of the active site. 204 to 227 contributes to the NADP(+) binding site; it reads IIADGGIRTNGDVAKSIRFGATMV.

It belongs to the IMPDH/GMPR family. GuaC type 2 subfamily.

It catalyses the reaction IMP + NH4(+) + NADP(+) = GMP + NADPH + 2 H(+). Functionally, catalyzes the irreversible NADPH-dependent deamination of GMP to IMP. It functions in the conversion of nucleobase, nucleoside and nucleotide derivatives of G to A nucleotides, and in maintaining the intracellular balance of A and G nucleotides. In Bacillus anthracis, this protein is GMP reductase.